The following is a 643-amino-acid chain: 1-deoxy-D-xylulose-5-phosphate synthase (643 aa).

Residues His78 and 119–121 (AHS) contribute to the thiamine diphosphate site. Residue Asp150 participates in Mg(2+) binding. Thiamine diphosphate contacts are provided by residues 151 to 152 (GS), Asn179, Tyr288, and Glu370. Asn179 contributes to the Mg(2+) binding site.

Belongs to the transketolase family. DXPS subfamily. Homodimer. It depends on Mg(2+) as a cofactor. Thiamine diphosphate is required as a cofactor.

The catalysed reaction is D-glyceraldehyde 3-phosphate + pyruvate + H(+) = 1-deoxy-D-xylulose 5-phosphate + CO2. It functions in the pathway metabolic intermediate biosynthesis; 1-deoxy-D-xylulose 5-phosphate biosynthesis; 1-deoxy-D-xylulose 5-phosphate from D-glyceraldehyde 3-phosphate and pyruvate: step 1/1. Functionally, catalyzes the acyloin condensation reaction between C atoms 2 and 3 of pyruvate and glyceraldehyde 3-phosphate to yield 1-deoxy-D-xylulose-5-phosphate (DXP). In Brucella ovis (strain ATCC 25840 / 63/290 / NCTC 10512), this protein is 1-deoxy-D-xylulose-5-phosphate synthase.